A 620-amino-acid polypeptide reads, in one-letter code: Toxin coregulated pilus biosynthesis protein I (620 aa).

The region spanning 344–580 (TMNDLSIKQT…DVAKQMEDIR (237 aa)) is the Methyl-accepting transducer domain.

It belongs to the methyl-accepting chemotaxis (MCP) protein family.

The protein resides in the cell inner membrane. In terms of biological role, may function as an environmental regulator of TCP biogenesis. Negatively regulates the synthesis of the major pilin subunit of TCP (TcpA). The protein is Toxin coregulated pilus biosynthesis protein I (tcpI) of Vibrio cholerae serotype O1 (strain ATCC 39541 / Classical Ogawa 395 / O395).